The sequence spans 317 residues: Beta-ketoacyl-[acyl-carrier-protein] synthase III (317 aa).

Catalysis depends on residues cysteine 112 and histidine 244. The interval 245–249 (QANVR) is ACP-binding. The active site involves asparagine 274.

Belongs to the thiolase-like superfamily. FabH family. As to quaternary structure, homodimer.

The protein resides in the cytoplasm. It catalyses the reaction malonyl-[ACP] + acetyl-CoA + H(+) = 3-oxobutanoyl-[ACP] + CO2 + CoA. It functions in the pathway lipid metabolism; fatty acid biosynthesis. Its function is as follows. Catalyzes the condensation reaction of fatty acid synthesis by the addition to an acyl acceptor of two carbons from malonyl-ACP. Catalyzes the first condensation reaction which initiates fatty acid synthesis and may therefore play a role in governing the total rate of fatty acid production. Possesses both acetoacetyl-ACP synthase and acetyl transacylase activities. Its substrate specificity determines the biosynthesis of branched-chain and/or straight-chain of fatty acids. This chain is Beta-ketoacyl-[acyl-carrier-protein] synthase III, found in Rickettsia canadensis (strain McKiel).